Consider the following 170-residue polypeptide: Adenine phosphoribosyltransferase (170 aa).

It belongs to the purine/pyrimidine phosphoribosyltransferase family. As to quaternary structure, homodimer.

The protein localises to the cytoplasm. The enzyme catalyses AMP + diphosphate = 5-phospho-alpha-D-ribose 1-diphosphate + adenine. Its pathway is purine metabolism; AMP biosynthesis via salvage pathway; AMP from adenine: step 1/1. In terms of biological role, catalyzes a salvage reaction resulting in the formation of AMP, that is energically less costly than de novo synthesis. The chain is Adenine phosphoribosyltransferase from Streptococcus pneumoniae (strain Taiwan19F-14).